The sequence spans 152 residues: Large ribosomal subunit protein uL30 (152 aa).

This sequence belongs to the universal ribosomal protein uL30 family. Part of the 50S ribosomal subunit.

The sequence is that of Large ribosomal subunit protein uL30 from Methanosphaera stadtmanae (strain ATCC 43021 / DSM 3091 / JCM 11832 / MCB-3).